The following is a 525-amino-acid chain: GMP synthase [glutamine-hydrolyzing] (525 aa).

Residues 16–205 (PVLVVDFGAQ…LHDFAGLGAQ (190 aa)) form the Glutamine amidotransferase type-1 domain. The Nucleophile role is filled by Cys93. Residues His179 and Glu181 contribute to the active site. One can recognise a GMPS ATP-PPase domain in the interval 206-399 (WTPANIANAL…LGLPEEIVAR (194 aa)). Residue 233 to 239 (SGGVDSA) coordinates ATP.

As to quaternary structure, homodimer.

The enzyme catalyses XMP + L-glutamine + ATP + H2O = GMP + L-glutamate + AMP + diphosphate + 2 H(+). The protein operates within purine metabolism; GMP biosynthesis; GMP from XMP (L-Gln route): step 1/1. Its function is as follows. Catalyzes the synthesis of GMP from XMP. This is GMP synthase [glutamine-hydrolyzing] from Mycobacterium bovis (strain BCG / Pasteur 1173P2).